The chain runs to 467 residues: Pancreatic lipase-related protein 3 (467 aa).

The first 17 residues, 1–17 (MLGIWIVAFLFFGTSRG), serve as a signal peptide directing secretion. C21 and C27 are oxidised to a cystine. A glycan (N-linked (GlcNAc...) asparagine) is linked at N74. A disulfide bridge connects residues C107 and C118. N-linked (GlcNAc...) asparagine glycosylation occurs at N125. S168 serves as the catalytic Nucleophile. Catalysis depends on D191, which acts as the Charge relay system. The cysteines at positions 252 and 277 are disulfide-linked. Residue H279 is the Charge relay system of the active site. 3 cysteine pairs are disulfide-bonded: C301–C312, C315–C320, and C451–C467. A PLAT domain is found at 355 to 467 (WRHKLSVKLS…PNILQNLKPC (113 aa)).

It belongs to the AB hydrolase superfamily. Lipase family. In terms of tissue distribution, overexpressed in hepatocellular carcinoma.

The protein resides in the secreted. It carries out the reaction a triacylglycerol + H2O = a diacylglycerol + a fatty acid + H(+). The sequence is that of Pancreatic lipase-related protein 3 (PNLIPRP3) from Homo sapiens (Human).